The chain runs to 462 residues: Tubulin gamma-1 chain (462 aa).

Ala-142 to Gly-148 lines the GTP pocket.

This sequence belongs to the tubulin family.

It localises to the cytoplasm. The protein resides in the cytoskeleton. Its subcellular location is the microtubule organizing center. The protein localises to the centrosome. Its function is as follows. Tubulin is the major constituent of microtubules. The gamma chain is found at microtubule organizing centers (MTOC) such as the spindle poles or the centrosome, suggesting that it is involved in the minus-end nucleation of microtubule assembly. The protein is Tubulin gamma-1 chain of Euplotes crassus.